Consider the following 591-residue polypeptide: Fanconi anemia group C protein homolog (591 aa).

Belongs to the multisubunit FA complex composed of FANCA, FANCB, FANCC, FANCE, FANCF, FANCG, FANCL/PHF9 and FANCM. This complex may also include HSP70. Interacts with ZBTB32. Upon IFNG induction, interacts with STAT1. Interacts with CDK1. Interacts with EIF2AK2. Ubiquitous.

The protein resides in the nucleus. It localises to the cytoplasm. In terms of biological role, DNA repair protein that may operate in a postreplication repair or a cell cycle checkpoint function. May be implicated in interstrand DNA cross-link repair and in the maintenance of normal chromosome stability. Upon IFNG induction, may facilitate STAT1 activation by recruiting STAT1 to IFNGR1. The chain is Fanconi anemia group C protein homolog (Fancc) from Mus musculus (Mouse).